The chain runs to 143 residues: Nucleoside diphosphate kinase (143 aa).

Residues Lys-11, Phe-59, Arg-87, Thr-93, Arg-104, and Asn-114 each coordinate ATP. Catalysis depends on His-117, which acts as the Pros-phosphohistidine intermediate.

It belongs to the NDK family. Homotetramer. Mg(2+) serves as cofactor.

Its subcellular location is the cytoplasm. The catalysed reaction is a 2'-deoxyribonucleoside 5'-diphosphate + ATP = a 2'-deoxyribonucleoside 5'-triphosphate + ADP. It carries out the reaction a ribonucleoside 5'-diphosphate + ATP = a ribonucleoside 5'-triphosphate + ADP. Functionally, major role in the synthesis of nucleoside triphosphates other than ATP. The ATP gamma phosphate is transferred to the NDP beta phosphate via a ping-pong mechanism, using a phosphorylated active-site intermediate. This chain is Nucleoside diphosphate kinase, found in Clostridium perfringens (strain SM101 / Type A).